The following is a 303-amino-acid chain: Mycothiol acetyltransferase (303 aa).

N-acetyltransferase domains are found at residues 4–141 and 154–303; these read ITVR…RSLA and IVLR…ANGA. Glutamate 38 contributes to the 1D-myo-inositol 2-(L-cysteinylamino)-2-deoxy-alpha-D-glucopyranoside binding site. Residue 80-82 coordinates acetyl-CoA; it reads AAV. 1D-myo-inositol 2-(L-cysteinylamino)-2-deoxy-alpha-D-glucopyranoside-binding residues include glutamate 181, lysine 223, and glutamate 234. Acetyl-CoA contacts are provided by residues 238–240 and 245–251; these read VGI and QGRGLGR. 1D-myo-inositol 2-(L-cysteinylamino)-2-deoxy-alpha-D-glucopyranoside is bound at residue tyrosine 272. 277–282 serves as a coordination point for acetyl-CoA; that stretch reads NTAAVN.

Belongs to the acetyltransferase family. MshD subfamily. Monomer.

The enzyme catalyses 1D-myo-inositol 2-(L-cysteinylamino)-2-deoxy-alpha-D-glucopyranoside + acetyl-CoA = mycothiol + CoA + H(+). In terms of biological role, catalyzes the transfer of acetyl from acetyl-CoA to desacetylmycothiol (Cys-GlcN-Ins) to form mycothiol. The protein is Mycothiol acetyltransferase of Nocardia farcinica (strain IFM 10152).